Consider the following 122-residue polypeptide: Large ribosomal subunit protein uL14 (122 aa).

Belongs to the universal ribosomal protein uL14 family. In terms of assembly, part of the 50S ribosomal subunit. Forms a cluster with proteins L3 and L19. In the 70S ribosome, L14 and L19 interact and together make contacts with the 16S rRNA in bridges B5 and B8.

Functionally, binds to 23S rRNA. Forms part of two intersubunit bridges in the 70S ribosome. The protein is Large ribosomal subunit protein uL14 of Thioalkalivibrio sulfidiphilus (strain HL-EbGR7).